A 153-amino-acid chain; its full sequence is uncharacterized protein (153 aa).

An N-terminal signal peptide occupies residues 1-19 (MKACLLLFFYFSFICQLHG).

This is an uncharacterized protein from Escherichia coli (strain K12).